Reading from the N-terminus, the 316-residue chain is Phosducin-like protein 1 (316 aa).

The disordered stretch occupies residues 1–61 (MEQNILNSIL…EDGDKEYEVD (61 aa)). The segment covering 12–41 (KFGDGDQERSDIRHNDSGDENDNHSDHEGN) has biased composition (basic and acidic residues). Residues 49–61 (EGNEDGDKEYEVD) are compositionally biased toward acidic residues. Positions 95–290 (SDYAEHREKQ…LLSSYDIIPN (196 aa)) constitute a Phosducin domain. The stretch at 102-156 (EKQKQKYLQKKYETQKMLEKMCFTTRDQPPPTEEENQLDSDDDDLERIRKARMEQ) forms a coiled coil. The thioredoxin fold stretch occupies residues 175–316 (FGYFKQIDSS…RPESDDDNDD (142 aa)). The interval 293 to 316 (KAKNSNWETSLSRKRPESDDDNDD) is disordered.

This sequence belongs to the phosducin family.

It is found in the cytoplasm. Functionally, required for normal chemotaxis in response to cAMP and folate. Required for the heterodimerization of the G protein beta and gamma subunits gpbA and gpgA, which is itself thought to be necessary for prenylation of the gamma subunit gpgA and its association with plasma membranes. The chain is Phosducin-like protein 1 (phlp1) from Dictyostelium discoideum (Social amoeba).